Consider the following 628-residue polypeptide: Set1/Ash2 histone methyltransferase complex subunit ASH2 (628 aa).

Position 1 is an N-acetylmethionine (Met1). A compositionally biased stretch (gly residues) spans 1 to 18 (MAAAGAGPGQEAGAGPGP). The segment at 1–66 (MAAAGAGPGQ…SGEAEGGEAN (66 aa)) adopts a PHD-type; atypical zinc-finger fold. A disordered region spans residues 1 to 107 (MAAAGAGPGQ…QAGSVDEENG (107 aa)). A compositionally biased stretch (low complexity) spans 36–65 (AAGAAAPPGEGISAAPTVEPSSGEAEGGEA). A DNA-binding region spans residues 67-177 (LVDVSGGLET…MCLSALANLT (111 aa)). Position 101 is a phosphoserine (Ser101). The C4-type zinc finger occupies 117-150 (CGICTKWFTADTFGIDTSSCLPFMTNYSFHCNVC). Over residues 235–252 (LVKEHPDPGSKDPEEDYP) the composition is skewed to basic and acidic residues. The disordered stretch occupies residues 235–331 (LVKEHPDPGS…AQRLPPHGYP (97 aa)). The segment covering 270 to 282 (NQKQSSAVSTSGN) has biased composition (polar residues). A compositionally biased stretch (gly residues) spans 283-295 (LNGGIAAGSSGKG). Arg296 carries the asymmetric dimethylarginine; by PRMT1 and PRMT5 modification. Ser316 is subject to Phosphoserine. Residues 316 to 628 (SDPLFSAQRL…DGRRSPPWEP (313 aa)) form an interaction with RBBP5 region. The B30.2/SPRY domain maps to 360 to 583 (LDCWAGKPIP…VSINFGPCFK (224 aa)).

In terms of assembly, interacts with HCFC1. Core component of several methyltransferase-containing complexes including MLL1/MLL, MLL2/3 (also named ASCOM complex) and MLL4/WBP7. Each complex is at least composed of ASH2L, RBBP5, WDR5, DPY30, one or more specific histone methyltransferases (KMT2A/MLL1, KMT2D/MLL2, KMT2C/MLL3 and KMT2B/MLL4), and the facultative components PAGR1, BACC1, CHD8, E2F6, HCFC1, HCFC2, HSP70, INO80C, KDM6A, KANSL1, LAS1L, MAX, MCRS1, MEN1, MGA, KAT8/MOF, NCOA6, PAXIP1/PTIP, PELP1, PHF20, PRP31, RING2, RUVB1/TIP49A, RUVB2/TIP49B, SENP3, TAF1, TAF4, TAF6, TAF7, TAF9, TEX10 and alpha- and beta-tubulin. Component of the SET1 complex, at least composed of the catalytic subunit (SETD1A or SETD1B), WDR5, WDR82, RBBP5, ASH2L/ASH2, CXXC1/CFP1, HCFC1 and DPY30. Found in a complex with RBBP5, ASH2L, DPY30, KMT2A, KMT2D and WDR5. Component of a histone methylation complex composed of at least ZNF335, RBBP5, ASH2L and WDR5; the complex may have histone H3-specific methyltransferase activity, however does not have specificity for 'Lys-4' of histone H3. Within the complex, interacts with ZNF335. Interacts with RBBP5. Components of this complex may associate with components of a nuclear receptor-mediated transcription complex to form a complex at least composed of ZNF335, HCFC1, CCAR2, EMSY, MKI67, RBBP5, ASH2L and WDR5. Within this complex also interacts with CCAR2 and EMSY. Interacts with DPY30. Interacts with SETD1A and SETD1B. Both monomethylated and dimethylated on arginine residues in the C-terminus. Arg-296 is the major site. Methylation is not required for nuclear localization, nor for MLL complex integrity or maintenance of global histone H3K4me3 levels. Ubiquitously expressed. Predominantly expressed in adult heart and testis and fetal lung and liver, with barely detectable expression in adult lung, liver, kidney, prostate, and peripheral leukocytes.

The protein resides in the nucleus. In terms of biological role, transcriptional regulator. Component or associated component of some histone methyltransferase complexes which regulates transcription through recruitment of those complexes to gene promoters. Component of the Set1/Ash2 histone methyltransferase (HMT) complex, a complex that specifically methylates 'Lys-4' of histone H3, but not if the neighboring 'Lys-9' residue is already methylated. As part of the MLL1/MLL complex it is involved in methylation and dimethylation at 'Lys-4' of histone H3. May play a role in hematopoiesis. In association with RBBP5 and WDR5, stimulates the histone methyltransferase activities of KMT2A, KMT2B, KMT2C, KMT2D, SETD1A and SETD1B. The polypeptide is Set1/Ash2 histone methyltransferase complex subunit ASH2 (ASH2L) (Homo sapiens (Human)).